A 187-amino-acid polypeptide reads, in one-letter code: Small ribosomal subunit protein uS5 (187 aa).

The 64-residue stretch at 21 to 84 (MVDKLVHINR…ESAKRDMIFV (64 aa)) folds into the S5 DRBM domain.

Belongs to the universal ribosomal protein uS5 family. As to quaternary structure, part of the 30S ribosomal subunit. Contacts proteins S4 and S8.

In terms of biological role, with S4 and S12 plays an important role in translational accuracy. Functionally, located at the back of the 30S subunit body where it stabilizes the conformation of the head with respect to the body. The chain is Small ribosomal subunit protein uS5 from Mesorhizobium japonicum (strain LMG 29417 / CECT 9101 / MAFF 303099) (Mesorhizobium loti (strain MAFF 303099)).